We begin with the raw amino-acid sequence, 181 residues long: ATP synthase subunit delta (181 aa).

Belongs to the ATPase delta chain family. F-type ATPases have 2 components, F(1) - the catalytic core - and F(0) - the membrane proton channel. F(1) has five subunits: alpha(3), beta(3), gamma(1), delta(1), epsilon(1). F(0) has three main subunits: a(1), b(2) and c(10-14). The alpha and beta chains form an alternating ring which encloses part of the gamma chain. F(1) is attached to F(0) by a central stalk formed by the gamma and epsilon chains, while a peripheral stalk is formed by the delta and b chains.

It is found in the cell inner membrane. F(1)F(0) ATP synthase produces ATP from ADP in the presence of a proton or sodium gradient. F-type ATPases consist of two structural domains, F(1) containing the extramembraneous catalytic core and F(0) containing the membrane proton channel, linked together by a central stalk and a peripheral stalk. During catalysis, ATP synthesis in the catalytic domain of F(1) is coupled via a rotary mechanism of the central stalk subunits to proton translocation. Its function is as follows. This protein is part of the stalk that links CF(0) to CF(1). It either transmits conformational changes from CF(0) to CF(1) or is implicated in proton conduction. The sequence is that of ATP synthase subunit delta from Chlorobium luteolum (strain DSM 273 / BCRC 81028 / 2530) (Pelodictyon luteolum).